Here is a 273-residue protein sequence, read N- to C-terminus: Type III pantothenate kinase (273 aa).

An ATP-binding site is contributed by 5-12; the sequence is DVGNSHVV. A substrate-binding site is contributed by 112-115; it reads GTDL. Aspartate 114 functions as the Proton acceptor in the catalytic mechanism. Position 134 (aspartate 134) interacts with K(+). ATP is bound at residue threonine 137. Threonine 189 lines the substrate pocket.

Belongs to the type III pantothenate kinase family. Homodimer. The cofactor is NH4(+). K(+) serves as cofactor.

It localises to the cytoplasm. The enzyme catalyses (R)-pantothenate + ATP = (R)-4'-phosphopantothenate + ADP + H(+). Its pathway is cofactor biosynthesis; coenzyme A biosynthesis; CoA from (R)-pantothenate: step 1/5. In terms of biological role, catalyzes the phosphorylation of pantothenate (Pan), the first step in CoA biosynthesis. In Treponema pallidum (strain Nichols), this protein is Type III pantothenate kinase.